A 693-amino-acid polypeptide reads, in one-letter code: TGF-beta-activated kinase 1 and MAP3K7-binding protein 2 (693 aa).

The 44-residue stretch at 8-51 folds into the CUE domain; sequence IDFQVLHDLRQKFPEVPEVVVSRCMLQNNNNLDACCAVLSQEST. The tract at residues 91–130 is disordered; that stretch reads GREGSRMNGSRTLTHSISDGQLQGGQSNSELFQQEPQTAP. Over residues 97-130 the composition is skewed to polar residues; it reads MNGSRTLTHSISDGQLQGGQSNSELFQQEPQTAP. Asymmetric dimethylarginine is present on Arg173. The segment at 219-310 is disordered; that stretch reads ITTPGGTTRQ…SGSSQSSAHS (92 aa). Residues 220 to 231 are compositionally biased toward low complexity; it reads TTPGGTTRQTQQ. The span at 232 to 282 shows a compositional bias: polar residues; that stretch reads HSGWVSQFNPMNPQQVYQPSQPGPWTTCPASNPLSHTSSQQPNQQGHQTSH. A compositionally biased stretch (low complexity) spans 286–310; the sequence is PISSPTTSQPPTIHSSGSSQSSAHS. Lys329 is covalently cross-linked (Glycyl lysine isopeptide (Lys-Gly) (interchain with G-Cter in SUMO)). The disordered stretch occupies residues 330–381; the sequence is LEPPQRNNSSKLRSSGPRTSSTSSSVNSQTLNRNQPTVYIAASPPNTDELMS. The span at 343–359 shows a compositional bias: low complexity; the sequence is SSGPRTSSTSSSVNSQT. 4 positions are modified to phosphoserine: Ser372, Ser450, Ser482, and Ser524. The stretch at 532-619 forms a coiled coil; sequence YTQALLVHQK…TKEIDLFQAR (88 aa). Lys562 is covalently cross-linked (Glycyl lysine isopeptide (Lys-Gly) (interchain with G-Cter in SUMO)). At Ser582 the chain carries Phosphoserine. A Glycyl lysine isopeptide (Lys-Gly) (interchain with G-Cter in ubiquitin) cross-link involves residue Lys611. Positions 642–663 are disordered; sequence PPKPKDQRSIIKTPKTQDTEDD. The RanBP2-type zinc finger occupies 663–693; sequence DEGAQWNCTACTFLNHPALIRCEQCEMPRHF. Cys673 bears the (Microbial infection) S-methylcysteine mark. An interaction with polyubiquitin region spans residues 675 to 685; the sequence is FLNHPALIRCE.

Interacts with MAP3K7 and TRAF6. Identified in the TRIKA2 complex composed of MAP3K7, TAB1 and TAB2. Binds 'Lys-63'-linked polyubiquitin chains. Interacts with NCOR1 and HDAC3 to form a ternary complex. Interacts (via C-terminal) with NUMBL (via PTB domain). Interacts (via the C-terminus) with DYNC2I2 (via WD domains). Interacts with RBCK1. Interacts with TRIM5. Interacts with TRIM38 (via B30.2/SPRY domain), leading to its translocation to lysosomes and degradation. Interacts with ASB1; this interaction promotes TAB2 stability. Degraded in a lysosome-dependent manner following interaction with TRIM38. Post-translationally, SUMOylated by TRIM60; leading to inhibition of MAPK/NF-kappaB activation and the innate immune response. In terms of processing, ubiquitinated; following IL1 stimulation or TRAF6 overexpression. Ubiquitination involves RBCK1 leading to proteasomal degradation. Ubiquitinated at Lys-611 by TRIM45 leading to proteasomal degradation. Phosphorylated. Post-translationally, (Microbial infection) Methylated at Cys-673 by enteropathogenic E.coli protein NleE or S.flexneri protein OspZ: methylation disrupts zinc-binding and ability to bind 'Lys-63'-linked ubiquitin, leading to NF-kappa-B inactivation. In terms of tissue distribution, widely expressed. In the embryo, expressed in the ventricular trabeculae, endothelial cells of the conotruncal cushions of the outflow tract and in the endothelial cells lining the developing aortic valves.

Its subcellular location is the membrane. The protein localises to the endosome membrane. It localises to the lysosome membrane. It is found in the cytoplasm. The protein resides in the cytosol. Functionally, adapter required to activate the JNK and NF-kappa-B signaling pathways through the specific recognition of 'Lys-63'-linked polyubiquitin chains by its RanBP2-type zinc finger (NZF). Acts as an adapter linking MAP3K7/TAK1 and TRAF6 to 'Lys-63'-linked polyubiquitin chains. The RanBP2-type zinc finger (NZF) specifically recognizes Lys-63'-linked polyubiquitin chains unanchored or anchored to the substrate proteins such as RIPK1/RIP1 and RIPK2: this acts as a scaffold to organize a large signaling complex to promote autophosphorylation of MAP3K7/TAK1, and subsequent activation of I-kappa-B-kinase (IKK) core complex by MAP3K7/TAK1. Also recognizes and binds Lys-63'-linked polyubiquitin chains of heterotypic 'Lys-63'-/'Lys-48'-linked branched ubiquitin chains. Regulates the IL1-mediated translocation of NCOR1 out of the nucleus. Involved in heart development. This chain is TGF-beta-activated kinase 1 and MAP3K7-binding protein 2, found in Homo sapiens (Human).